The following is a 239-amino-acid chain: Small ribosomal subunit protein uS3c (239 aa).

Residues 43-139 enclose the KH type-2 domain; sequence IKNYIQKNRK…RFNISIEKVK (97 aa). A disordered region spans residues 50–74; sequence NRKKGSNRKIESDSSSEVITHNRKM.

Belongs to the universal ribosomal protein uS3 family. In terms of assembly, part of the 30S ribosomal subunit.

It localises to the plastid. The protein resides in the chloroplast. This is Small ribosomal subunit protein uS3c (rps3) from Hordeum vulgare (Barley).